The chain runs to 231 residues: 7-cyano-7-deazaguanine synthase (231 aa).

8–18 (FSGGQDSTTCL) is an ATP binding site. 4 residues coordinate Zn(2+): Cys188, Cys197, Cys200, and Cys203.

It belongs to the QueC family. The cofactor is Zn(2+).

The enzyme catalyses 7-carboxy-7-deazaguanine + NH4(+) + ATP = 7-cyano-7-deazaguanine + ADP + phosphate + H2O + H(+). The protein operates within purine metabolism; 7-cyano-7-deazaguanine biosynthesis. Functionally, catalyzes the ATP-dependent conversion of 7-carboxy-7-deazaguanine (CDG) to 7-cyano-7-deazaguanine (preQ(0)). The sequence is that of 7-cyano-7-deazaguanine synthase from Salmonella paratyphi B (strain ATCC BAA-1250 / SPB7).